The chain runs to 277 residues: Elongation factor 1-delta (277 aa).

Ala-2 carries the N-acetylalanine modification. Lys-17 is modified (N6-acetyllysine). Phosphoserine is present on residues Ser-37, Ser-44, Ser-60, Ser-86, and Ser-106. Lys-107 carries the N6-acetyllysine modification. Residues 113–171 (SALEKSSPAHRATTPQTQHVSPMRQVEPPSRKAATATEDDEDDDIDLFGSDEEEDKEAA) are disordered. Lys-117 carries the N6-acetyllysine; alternate modification. The residue at position 117 (Lys-117) is an N6-succinyllysine; alternate. Residue Ser-119 is modified to Phosphoserine. A Phosphothreonine modification is found at Thr-129. Position 133 is a phosphoserine (Ser-133). Position 147 is a phosphothreonine (Thr-147). The span at 149–168 (TEDDEDDDIDLFGSDEEEDK) shows a compositional bias: acidic residues. Phosphoserine; by CK2 is present on Ser-162.

It belongs to the EF-1-beta/EF-1-delta family. In terms of assembly, EF-1 is composed of 4 subunits: alpha, beta, delta, and gamma.

EF-1-beta and EF-1-delta stimulate the exchange of GDP bound to EF-1-alpha to GTP. This is Elongation factor 1-delta (EEF1D) from Ovis aries (Sheep).